The following is a 250-amino-acid chain: UPF0259 membrane protein bbp_256 (250 aa).

6 helical membrane passes run 21–41, 86–106, 125–145, 146–166, 188–208, and 216–236; these read PIIVTFVLLSSTITVVIDSII, FSLLIGSTFLLGNLITFIQMT, FFKLLQLIFTTTIITQLGFLL, YFIPGFTTIILFSLSPIILLI, IIVPAIIFWLCFKIFIILIIS, and FLAYFILNLCINFISSILIIY.

This sequence belongs to the UPF0259 family.

The protein resides in the cell membrane. The protein is UPF0259 membrane protein bbp_256 of Buchnera aphidicola subsp. Baizongia pistaciae (strain Bp).